A 103-amino-acid polypeptide reads, in one-letter code: Small ribosomal subunit protein uS10 (103 aa).

Belongs to the universal ribosomal protein uS10 family. Part of the 30S ribosomal subunit.

Involved in the binding of tRNA to the ribosomes. The chain is Small ribosomal subunit protein uS10 from Cutibacterium acnes (strain DSM 16379 / KPA171202) (Propionibacterium acnes).